We begin with the raw amino-acid sequence, 176 residues long: RNA 2',3'-cyclic phosphodiesterase (176 aa).

His39 (proton donor) is an active-site residue. Short sequence motifs (HXTX) lie at residues His39–Leu42 and His122–Val125. His122 serves as the catalytic Proton acceptor.

This sequence belongs to the 2H phosphoesterase superfamily. ThpR family.

It carries out the reaction a 3'-end 2',3'-cyclophospho-ribonucleotide-RNA + H2O = a 3'-end 2'-phospho-ribonucleotide-RNA + H(+). Hydrolyzes RNA 2',3'-cyclic phosphodiester to an RNA 2'-phosphomonoester. This chain is RNA 2',3'-cyclic phosphodiesterase, found in Archaeoglobus fulgidus (strain ATCC 49558 / DSM 4304 / JCM 9628 / NBRC 100126 / VC-16).